Reading from the N-terminus, the 142-residue chain is Ribosome-binding factor A (142 aa).

Residues 120-142 (TLGEVQSESDQPTTYETTTVNKT) are disordered. Positions 123–142 (EVQSESDQPTTYETTTVNKT) are enriched in polar residues.

The protein belongs to the RbfA family. In terms of assembly, monomer. Binds 30S ribosomal subunits, but not 50S ribosomal subunits or 70S ribosomes.

The protein resides in the cytoplasm. Its function is as follows. One of several proteins that assist in the late maturation steps of the functional core of the 30S ribosomal subunit. Associates with free 30S ribosomal subunits (but not with 30S subunits that are part of 70S ribosomes or polysomes). Required for efficient processing of 16S rRNA. May interact with the 5'-terminal helix region of 16S rRNA. This chain is Ribosome-binding factor A, found in Prochlorococcus marinus (strain MIT 9313).